The chain runs to 175 residues: RNA pyrophosphohydrolase (175 aa).

A Nudix hydrolase domain is found at 6 to 149 (GYRPNVGIVI…KRDVYRRVMK (144 aa)). Positions 38-59 (GGINAGETAEQAMYRELFEEVG) match the Nudix box motif.

Belongs to the Nudix hydrolase family. RppH subfamily. The cofactor is a divalent metal cation.

Its function is as follows. Accelerates the degradation of transcripts by removing pyrophosphate from the 5'-end of triphosphorylated RNA, leading to a more labile monophosphorylated state that can stimulate subsequent ribonuclease cleavage. The polypeptide is RNA pyrophosphohydrolase (Sodalis glossinidius (strain morsitans)).